We begin with the raw amino-acid sequence, 145 residues long: MRALIQRVSEASVTVEGELLGEIGPGLLILVCAMQGDGEDQASALAARIAKLRIFKDEAGKMNRSVRDTGGAALVVSQFTLAADTSRGNRPGFSAAAPPADGERLYRHFAAEIAACGIPTATGRFGADMKVRLLNDGPVTIWMES.

The Gly-cisPro motif, important for rejection of L-amino acids motif lies at 137–138 (GP).

This sequence belongs to the DTD family. In terms of assembly, homodimer.

It localises to the cytoplasm. It carries out the reaction glycyl-tRNA(Ala) + H2O = tRNA(Ala) + glycine + H(+). The enzyme catalyses a D-aminoacyl-tRNA + H2O = a tRNA + a D-alpha-amino acid + H(+). In terms of biological role, an aminoacyl-tRNA editing enzyme that deacylates mischarged D-aminoacyl-tRNAs. Also deacylates mischarged glycyl-tRNA(Ala), protecting cells against glycine mischarging by AlaRS. Acts via tRNA-based rather than protein-based catalysis; rejects L-amino acids rather than detecting D-amino acids in the active site. By recycling D-aminoacyl-tRNA to D-amino acids and free tRNA molecules, this enzyme counteracts the toxicity associated with the formation of D-aminoacyl-tRNA entities in vivo and helps enforce protein L-homochirality. The protein is D-aminoacyl-tRNA deacylase of Cereibacter sphaeroides (strain ATCC 17029 / ATH 2.4.9) (Rhodobacter sphaeroides).